An 86-amino-acid chain; its full sequence is Small ribosomal subunit protein eS27 (86 aa).

The segment at 39–61 (CQGCFNITTVFSHSQTVVVCPGC) adopts a C4-type zinc-finger fold.

It belongs to the eukaryotic ribosomal protein eS27 family. Requires Zn(2+) as cofactor.

The sequence is that of Small ribosomal subunit protein eS27 (RPS27) from Hordeum vulgare (Barley).